The sequence spans 113 residues: Putative glycerol transporter Lin0367 (113 aa).

Helical transmembrane passes span 3 to 23 (IGIA…IRMM), 30 to 50 (EWGA…VWTI), 63 to 83 (GTVW…ASLL), and 92 to 112 (VVNL…LSLF).

It is found in the membrane. Its function is as follows. Could be involved in the glycerol uptake either via facilitated diffusion or active transport. The chain is Putative glycerol transporter Lin0367 from Listeria innocua serovar 6a (strain ATCC BAA-680 / CLIP 11262).